The primary structure comprises 245 residues: MMPLILLPAVDVVEGRAVRLVQGKAGSQTEYGSAVDAALGWQRDGAEWIHLVDLDAAFGRGSNHELLAEVVGKLDVQVELSGGIRDDESLAAALATGCARVNVGTAALENPQWCARVIGEHGDQVAVGLDVQIIDGEHRLRGRGWETDGGDLWDVLERLDSEGCSRFVVTDITKDGTLGGPNLDLLAGVADRTDAPVIASGGVSSLDDLRAIATLTHRGVEGAIVGKALYARRFTLPQALAAVRD.

Aspartate 11 serves as the catalytic Proton acceptor. Aspartate 130 acts as the Proton donor in catalysis.

The protein belongs to the HisA/HisF family.

It is found in the cytoplasm. It carries out the reaction 1-(5-phospho-beta-D-ribosyl)-5-[(5-phospho-beta-D-ribosylamino)methylideneamino]imidazole-4-carboxamide = 5-[(5-phospho-1-deoxy-D-ribulos-1-ylimino)methylamino]-1-(5-phospho-beta-D-ribosyl)imidazole-4-carboxamide. The catalysed reaction is N-(5-phospho-beta-D-ribosyl)anthranilate = 1-(2-carboxyphenylamino)-1-deoxy-D-ribulose 5-phosphate. It functions in the pathway amino-acid biosynthesis; L-histidine biosynthesis; L-histidine from 5-phospho-alpha-D-ribose 1-diphosphate: step 4/9. It participates in amino-acid biosynthesis; L-tryptophan biosynthesis; L-tryptophan from chorismate: step 3/5. Its function is as follows. Involved in both the histidine and tryptophan biosynthetic pathways. The sequence is that of Phosphoribosyl isomerase A (priA) from Mycobacterium bovis (strain ATCC BAA-935 / AF2122/97).